The sequence spans 476 residues: ATP synthase subunit beta (476 aa).

ATP is bound at residue 154–161; it reads GGAGVGKT.

The protein belongs to the ATPase alpha/beta chains family. In terms of assembly, F-type ATPases have 2 components, CF(1) - the catalytic core - and CF(0) - the membrane proton channel. CF(1) has five subunits: alpha(3), beta(3), gamma(1), delta(1), epsilon(1). CF(0) has four main subunits: a(1), b(1), b'(1) and c(9-12).

It localises to the cell inner membrane. The catalysed reaction is ATP + H2O + 4 H(+)(in) = ADP + phosphate + 5 H(+)(out). In terms of biological role, produces ATP from ADP in the presence of a proton gradient across the membrane. The catalytic sites are hosted primarily by the beta subunits. The chain is ATP synthase subunit beta from Rhodopseudomonas palustris (strain HaA2).